Reading from the N-terminus, the 196-residue chain is Large ribosomal subunit protein bL20 (196 aa).

The protein belongs to the bacterial ribosomal protein bL20 family.

Functionally, binds directly to 23S ribosomal RNA and is necessary for the in vitro assembly process of the 50S ribosomal subunit. It is not involved in the protein synthesizing functions of that subunit. In Oenococcus oeni (strain ATCC BAA-331 / PSU-1), this protein is Large ribosomal subunit protein bL20 (rplT).